We begin with the raw amino-acid sequence, 318 residues long: MANTLEQLKAFTTIVADTGDIEAIKRYQPEDATTNPSLILKASEIPEYSALIENAIDWAKSQSDVLAQQIEDAGDKLAVNIGLEILKIVPGRISTEVDARLSFDKEGSIAKAHKLIKLYQEAGIDKSRILIKLASTWEGICAAKQLEQEGINCNLTLLFSFAQARACAEAGVYLISPFVGRILDWYKKDTGLEYSATDDPGVVSVTSIYDYYKRHGFNTVVMGASFRNTGEIIELAGCDRLTIGPALLEELQNSTTPIVQKLLPATEVVAPEAEMTEAQFRWEFNEDPMAVEKLAEGIRNFAIDQGKLEVMLKEKLSS.

Lys132 serves as the catalytic Schiff-base intermediate with substrate.

The protein belongs to the transaldolase family. Type 1 subfamily. Homodimer.

It is found in the cytoplasm. The catalysed reaction is D-sedoheptulose 7-phosphate + D-glyceraldehyde 3-phosphate = D-erythrose 4-phosphate + beta-D-fructose 6-phosphate. The protein operates within carbohydrate degradation; pentose phosphate pathway; D-glyceraldehyde 3-phosphate and beta-D-fructose 6-phosphate from D-ribose 5-phosphate and D-xylulose 5-phosphate (non-oxidative stage): step 2/3. In terms of biological role, transaldolase is important for the balance of metabolites in the pentose-phosphate pathway. This chain is Transaldolase, found in Shewanella pealeana (strain ATCC 700345 / ANG-SQ1).